We begin with the raw amino-acid sequence, 593 residues long: Isocitrate dehydrogenase kinase/phosphatase (593 aa).

ATP-binding positions include 315–321 (APGIRGM) and K336. Residue D371 is part of the active site.

Belongs to the AceK family.

It localises to the cytoplasm. It catalyses the reaction L-seryl-[isocitrate dehydrogenase] + ATP = O-phospho-L-seryl-[isocitrate dehydrogenase] + ADP + H(+). Bifunctional enzyme which can phosphorylate or dephosphorylate isocitrate dehydrogenase (IDH) on a specific serine residue. This is a regulatory mechanism which enables bacteria to bypass the Krebs cycle via the glyoxylate shunt in response to the source of carbon. When bacteria are grown on glucose, IDH is fully active and unphosphorylated, but when grown on acetate or ethanol, the activity of IDH declines drastically concomitant with its phosphorylation. The polypeptide is Isocitrate dehydrogenase kinase/phosphatase (Salmonella typhi).